The sequence spans 397 residues: Proteinase-activated receptor 2 (397 aa).

The N-terminal stretch at 1–25 (MRSPSAAWLLGAAILLAASLSCSGT) is a signal peptide. Residues 26–36 (IQGTNRSSKGR) constitute a propeptide, removed for receptor activation. The N-linked (GlcNAc...) asparagine glycan is linked to N30. Topologically, residues 37 to 71 (SLIGKVDGTSHVTGKGVTVETVFSVDEFSASVLTG) are extracellular. Residues 72–101 (KLTTVFLPIVYTIVFVVGLPSNGMALWVFL) traverse the membrane as a helical segment. The Cytoplasmic segment spans residues 102–108 (FRTKKKH). A helical membrane pass occupies residues 109–137 (PAVIYMANLALADLLSVIWFPLKIAYHIH). Residues 138–149 (GNNWIYGEALCN) are Extracellular-facing. An intrachain disulfide couples C148 to C226. The chain crosses the membrane as a helical span at residues 150–177 (VLIGFFYGNMYCSILFMTCLSVQRYWVI). Residues 178 to 183 (VNPMGH) are Cytoplasmic-facing. Residues 184–211 (SRKKANIAIGISLAIWLLILLVTIPLYV) form a helical membrane-spanning segment. The Extracellular portion of the chain corresponds to 212–235 (VKQTIFIPALNITTCHDVLPEQLL). A glycan (N-linked (GlcNAc...) asparagine) is linked at N222. A helical transmembrane segment spans residues 236 to 269 (VGDMFNYFLSLAIGVFLFPAFLTASAYVLMIRML). The Cytoplasmic portion of the chain corresponds to 270-277 (RSSAMDEN). A helical membrane pass occupies residues 278-317 (SEKKRKRAIKLIVTVLAMYLICFTPSNLLLVVHYFLIKSQ). At 318-323 (GQSHVY) the chain is on the extracellular side. A helical membrane pass occupies residues 324–347 (ALYIVALCLSTLNSCIDPFVYYFV). At 348-397 (SHDFRDHAKNALLCRSVRTVKQMQVSLTSKKHSRKSSSYSSSSTTVKTSY) the chain is on the cytoplasmic side. A lipid anchor (S-palmitoyl cysteine) is attached at C361. Residues 373 to 397 (SLTSKKHSRKSSSYSSSSTTVKTSY) form a disordered region. A compositionally biased stretch (low complexity) spans 383–397 (SSSYSSSSTTVKTSY).

It belongs to the G-protein coupled receptor 1 family. As to quaternary structure, interacts with TLR4, COPS5 and TMED2. Interacts with GNAQ, GNA11, GNA12, GNA13 and GNA14. In terms of processing, a proteolytic cleavage generates a new N-terminus that functions as a tethered ligand. Activating serine proteases include trypsin, mast cell tryptase, coagulation factors VII and Xa, myeloblastin/PRTN3 and membrane-type serine protease 1/ST14. Subsequent cleavage by serine proteases, including neutrophil elastase and cathepsin G, leads to receptor deactivation. At least in part, implicated proteases are also shown to activate the receptor; the glycosylation status of the receptor is thought to contribute to the difference. In addition to conventional trypsin-like proteases activated by other proteases and glycosidases derived from bacteria, fungi and insects. Activated by serine protease allergens such as dust mite Der p3 and Der p9 and mold Pen c13. Activated by P.gingivalis arginine-specific (trypsin-like) cysteine proteinases called gingipains. Activated by S.griseus exogenous chitinase. Activated by A.alternata aspartate protease; the cleavage generates non-conventional processed forms. Proteolytically cleaved by coagulation factor Xa (F10); cleavage results in activation of F2RL1-dependent signaling. Post-translationally, N-glycosylated and sialylated. Multiple phosphorylated on serine and threonine residues in the cytoplasmic region upon receptor activation; required for receptor desensitization and recruitment of beta-arrestin. In terms of processing, monoubiquitinated by CBL at the plasma membrane and in early endosomes; not required for receptor endocytosis but for translocation to late endosomes or lysosomes. Deubiquitination involves STAMBP and USP8; required for lysosomal trafficking and receptor degradation. In terms of tissue distribution, widely expressed in tissues with especially high levels in pancreas, liver, kidney, small intestine, and colon. Moderate expression is detected in many organs, but none in brain or skeletal muscle. Expressed in endothelial cells.

The protein resides in the cell membrane. With respect to regulation, activated upon interaction by mucunain, a cowhage (Mucuna pruriens) plant cysteine proteinase. Its function is as follows. Receptor for trypsin and trypsin-like enzymes coupled to G proteins. Its function is mediated through the activation of several signaling pathways including phospholipase C (PLC), intracellular calcium, mitogen-activated protein kinase (MAPK), I-kappaB kinase/NF-kappaB and Rho. Can also be transactivated by cleaved F2R/PAR1. Involved in modulation of inflammatory responses and regulation of innate and adaptive immunity, and acts as a sensor for proteolytic enzymes generated during infection. Generally is promoting inflammation. Can signal synergistically with TLR4 and probably TLR2 in inflammatory responses and modulates TLR3 signaling. Has a protective role in establishing the endothelial barrier; the activity involves coagulation factor X. Regulates endothelial cell barrier integrity during neutrophil extravasation, probably following proteolytic cleavage by PRTN3. Proposed to have a bronchoprotective role in airway epithelium, but also shown to compromise the airway epithelial barrier by interrupting E-cadherin adhesion. Involved in the regulation of vascular tone; activation results in hypotension presumably mediated by vasodilation. Associates with a subset of G proteins alpha subunits such as GNAQ, GNA11, GNA14, GNA12 and GNA13, but probably not with G(o)-alpha, G(i) subunit alpha-1 and G(i) subunit alpha-2. However, according to PubMed:21627585 can signal through G(i) subunit alpha. Believed to be a class B receptor which internalizes as a complex with arrestin and traffic with it to endosomal vesicles, presumably as desensitized receptor, for extended periods of time. Mediates inhibition of TNF-alpha stimulated JNK phosphorylation via coupling to GNAQ and GNA11; the function involves dissociation of RIPK1 and TRADD from TNFR1. Mediates phosphorylation of nuclear factor NF-kappa-B RELA subunit at 'Ser-536'; the function involves IKBKB and is predominantly independent of G proteins. Involved in cellular migration. Involved in cytoskeletal rearrangement and chemotaxis through beta-arrestin-promoted scaffolds; the function is independent of GNAQ and GNA11 and involves promotion of cofilin dephosphorylation and actin filament severing. Induces redistribution of COPS5 from the plasma membrane to the cytosol and activation of the JNK cascade is mediated by COPS5. Involved in the recruitment of leukocytes to the sites of inflammation and is the major PAR receptor capable of modulating eosinophil function such as pro-inflammatory cytokine secretion, superoxide production and degranulation. During inflammation promotes dendritic cell maturation, trafficking to the lymph nodes and subsequent T-cell activation. Involved in antimicrobial response of innate immune cells; activation enhances phagocytosis of Gram-positive and killing of Gram-negative bacteria. Acts synergistically with interferon-gamma in enhancing antiviral responses. Implicated in a number of acute and chronic inflammatory diseases such as of the joints, lungs, brain, gastrointestinal tract, periodontium, skin, and vascular systems, and in autoimmune disorders. Probably mediates activation of pro-inflammatory and pro-fibrotic responses in fibroblasts, triggered by coagulation factor Xa (F10). Mediates activation of barrier protective signaling responses in endothelial cells, triggered by coagulation factor Xa (F10). The chain is Proteinase-activated receptor 2 (F2RL1) from Homo sapiens (Human).